The following is a 140-amino-acid chain: Nucleoside diphosphate kinase (140 aa).

Residues Lys11, Phe59, Arg87, Thr93, Arg104, and Asn114 each coordinate ATP. His117 (pros-phosphohistidine intermediate) is an active-site residue.

It belongs to the NDK family. In terms of assembly, homotetramer. Mg(2+) serves as cofactor.

It is found in the cytoplasm. The catalysed reaction is a 2'-deoxyribonucleoside 5'-diphosphate + ATP = a 2'-deoxyribonucleoside 5'-triphosphate + ADP. The enzyme catalyses a ribonucleoside 5'-diphosphate + ATP = a ribonucleoside 5'-triphosphate + ADP. In terms of biological role, major role in the synthesis of nucleoside triphosphates other than ATP. The ATP gamma phosphate is transferred to the NDP beta phosphate via a ping-pong mechanism, using a phosphorylated active-site intermediate. The protein is Nucleoside diphosphate kinase of Rickettsia prowazekii (strain Madrid E).